We begin with the raw amino-acid sequence, 349 residues long: tRNA pseudouridine synthase D (349 aa).

Phe-27 lines the substrate pocket. Asp-80 serves as the catalytic Nucleophile. Residue Asn-129 participates in substrate binding. In terms of domain architecture, TRUD spans Gly-155–Leu-303. Phe-329 is a binding site for substrate.

The protein belongs to the pseudouridine synthase TruD family.

The catalysed reaction is uridine(13) in tRNA = pseudouridine(13) in tRNA. Functionally, responsible for synthesis of pseudouridine from uracil-13 in transfer RNAs. The polypeptide is tRNA pseudouridine synthase D (Escherichia coli O17:K52:H18 (strain UMN026 / ExPEC)).